A 383-amino-acid chain; its full sequence is 4-hydroxy-3-methylbut-2-en-1-yl diphosphate synthase (flavodoxin) (383 aa).

C275, C278, C310, and E317 together coordinate [4Fe-4S] cluster.

Belongs to the IspG family. [4Fe-4S] cluster serves as cofactor.

It carries out the reaction (2E)-4-hydroxy-3-methylbut-2-enyl diphosphate + oxidized [flavodoxin] + H2O + 2 H(+) = 2-C-methyl-D-erythritol 2,4-cyclic diphosphate + reduced [flavodoxin]. The protein operates within isoprenoid biosynthesis; isopentenyl diphosphate biosynthesis via DXP pathway; isopentenyl diphosphate from 1-deoxy-D-xylulose 5-phosphate: step 5/6. In terms of biological role, converts 2C-methyl-D-erythritol 2,4-cyclodiphosphate (ME-2,4cPP) into 1-hydroxy-2-methyl-2-(E)-butenyl 4-diphosphate. The polypeptide is 4-hydroxy-3-methylbut-2-en-1-yl diphosphate synthase (flavodoxin) (Dinoroseobacter shibae (strain DSM 16493 / NCIMB 14021 / DFL 12)).